Here is a 207-residue protein sequence, read N- to C-terminus: Large ribosomal subunit protein uL3 (207 aa).

The protein belongs to the universal ribosomal protein uL3 family. As to quaternary structure, part of the 50S ribosomal subunit. Forms a cluster with proteins L14 and L19.

One of the primary rRNA binding proteins, it binds directly near the 3'-end of the 23S rRNA, where it nucleates assembly of the 50S subunit. The polypeptide is Large ribosomal subunit protein uL3 (Thermotoga maritima (strain ATCC 43589 / DSM 3109 / JCM 10099 / NBRC 100826 / MSB8)).